Consider the following 408-residue polypeptide: GDSL esterase/lipase At1g54790 (408 aa).

A signal peptide spans 1–24; the sequence is MNITKMKLFYVILFFISSLQISNS. Ser38 acts as the Nucleophile in catalysis. Residues Asn273, Asn289, and Asn361 are each glycosylated (N-linked (GlcNAc...) asparagine). Active-site residues include Asp370 and His373.

It belongs to the 'GDSL' lipolytic enzyme family.

It is found in the secreted. The sequence is that of GDSL esterase/lipase At1g54790 from Arabidopsis thaliana (Mouse-ear cress).